Here is a 228-residue protein sequence, read N- to C-terminus: ATP phosphoribosyltransferase (228 aa).

Belongs to the ATP phosphoribosyltransferase family. Short subfamily. As to quaternary structure, heteromultimer composed of HisG and HisZ subunits.

Its subcellular location is the cytoplasm. The enzyme catalyses 1-(5-phospho-beta-D-ribosyl)-ATP + diphosphate = 5-phospho-alpha-D-ribose 1-diphosphate + ATP. It participates in amino-acid biosynthesis; L-histidine biosynthesis; L-histidine from 5-phospho-alpha-D-ribose 1-diphosphate: step 1/9. Its function is as follows. Catalyzes the condensation of ATP and 5-phosphoribose 1-diphosphate to form N'-(5'-phosphoribosyl)-ATP (PR-ATP). Has a crucial role in the pathway because the rate of histidine biosynthesis seems to be controlled primarily by regulation of HisG enzymatic activity. The polypeptide is ATP phosphoribosyltransferase (Moorella thermoacetica (strain ATCC 39073 / JCM 9320)).